The chain runs to 423 residues: Deferrochelatase (423 aa).

The tat-type signal signal peptide spans 1–35 (MQYEDKNGVNEPSRRRLLKGIGALALAGSCPVAHA). Heme b-binding positions include 236-238 (GTA), H329, 334-336 (NPR), and R347.

Belongs to the DyP-type peroxidase family. EfeB subfamily. The heme-bound EfeB forms a homodimer whereas the apo-form mainly exists as a monomer. Part of a ferrous iron transporter composed of EfeU, EfeO and EfeB. It depends on heme b as a cofactor. Predicted to be exported by the Tat system. The position of the signal peptide cleavage has not been experimentally proven.

It localises to the periplasm. It catalyses the reaction heme b + 2 H(+) = protoporphyrin IX + Fe(2+). Functionally, involved in the recovery of exogenous heme iron. Extracts iron from heme while preserving the protoporphyrin ring intact. Also displays peroxidase activity on guaiacol and catechol in vitro. The deferrochelatase activity appears to be closely related to the peroxidation activity, but the link is unclear. The protein is Deferrochelatase (efeB) of Escherichia coli O157:H7.